The following is a 271-amino-acid chain: GATA transcription factor 19 (271 aa).

The tract at residues 1–23 (MAAEPPADGRDPPADDGAAGDGA) is disordered. The 36-residue stretch at 33–68 (LSAASEQLTLVYQGEVYVFDPVPPQKVQAVLLVLGG) folds into the Tify domain. Residues 95-137 (RVASLMRFREKRKERCFDKKIRYSVRKEVAQKMKRRKGQFAGR) form the CCT domain. The GATA-type zinc finger occupies 166-193 (CQNCGISSRLTPAMRRGPAGPRSLCNAC). The interval 238 to 271 (NQTTMKTDTEMVPEQEQKADVLPPTKEEDSMATS) is disordered. The span at 252–271 (QEQKADVLPPTKEEDSMATS) shows a compositional bias: basic and acidic residues.

It belongs to the type IV zinc-finger family. Class C subfamily.

The protein resides in the nucleus. Functionally, transcriptional activator that specifically binds 5'-GATA-3' or 5'-GAT-3' motifs within gene promoters. This chain is GATA transcription factor 19, found in Oryza sativa subsp. japonica (Rice).